The primary structure comprises 381 residues: Transaldolase 2 (381 aa).

Residue K141 is the Schiff-base intermediate with substrate of the active site.

This sequence belongs to the transaldolase family. Type 2 subfamily.

It localises to the cytoplasm. The enzyme catalyses D-sedoheptulose 7-phosphate + D-glyceraldehyde 3-phosphate = D-erythrose 4-phosphate + beta-D-fructose 6-phosphate. It functions in the pathway carbohydrate degradation; pentose phosphate pathway; D-glyceraldehyde 3-phosphate and beta-D-fructose 6-phosphate from D-ribose 5-phosphate and D-xylulose 5-phosphate (non-oxidative stage): step 2/3. Its function is as follows. Transaldolase is important for the balance of metabolites in the pentose-phosphate pathway. The polypeptide is Transaldolase 2 (tal2) (Nostoc sp. (strain PCC 7120 / SAG 25.82 / UTEX 2576)).